The sequence spans 439 residues: Probable eukaryotic translation initiation factor 5-1 (439 aa).

Position 29–36 (29–36) interacts with GTP; the sequence is GRGNGIKT. Residues 143-245 form a disordered region; that stretch reads LKNPPEQKKS…REAAEKRMKE (103 aa). A compositionally biased stretch (basic and acidic residues) spans 147–186; that stretch reads PEQKKSSKDKKSMRRAEKERLREGEAADEEMRKLKKEAAS. Residues 214–228 show a composition bias toward acidic residues; that stretch reads DENDQADSEEDDDDV. Threonine 232 is modified (phosphothreonine). A compositionally biased stretch (basic and acidic residues) spans 234–245; the sequence is TSREAAEKRMKE. The 157-residue stretch at 283–439 folds into the W2 domain; that stretch reads KIPENAHEKL…QNAESESEEE (157 aa). 2 positions are modified to phosphoserine: serine 434 and serine 436.

This sequence belongs to the eIF-2-beta/eIF-5 family.

Functionally, catalyzes the hydrolysis of GTP bound to the 40S ribosomal initiation complex (40S.mRNA.Met-tRNA[F].eIF-2.GTP) with the subsequent joining of a 60S ribosomal subunit resulting in the release of eIF-2 and the guanine nucleotide. The subsequent joining of a 60S ribosomal subunit results in the formation of a functional 80S initiation complex (80S.mRNA.Met-tRNA[F]). This Arabidopsis thaliana (Mouse-ear cress) protein is Probable eukaryotic translation initiation factor 5-1.